Reading from the N-terminus, the 1141-residue chain is cGMP-inhibited 3',5'-cyclic phosphodiesterase 3A (1141 aa).

Residues 1 to 41 (MAVRGEAAQDWAKPGLRGPSPAPVARGDHRCRGGSPSSPRG) form a disordered region. A helical transmembrane segment spans residues 62–82 (SALCAGSLSVLLALLVRLVGG). The disordered stretch occupies residues 89 to 111 (ESSQEAAAEEEEEEGARGGVFPG). 5 helical membrane-spanning segments follow: residues 127–147 (LQPA…GLCL), 157–177 (AVAL…SLGV), 182–202 (LLSL…TWLV), 207–227 (LGVL…VSLE), and 229–249 (FKVA…LLLA). A disordered region spans residues 262 to 309 (PAPPRERFGSQSSARTKEEIPGWKRRRRSSSVVAGEMSGCGGKSHRRT). The residue at position 310 (Ser310) is a Phosphoserine. Over residues 433–445 (RVSSTWTTTTSAT) the composition is skewed to low complexity. The interval 433 to 479 (RVSSTWTTTTSATGLPTLEPAPVRRDRSASIKPHEAPSPSAVNPDSW) is disordered. Residues 454–467 (PVRRDRSASIKPHE) show a composition bias toward basic and acidic residues. 4 positions are modified to phosphoserine: Ser492, Ser520, Ser524, and Ser533. The tract at residues 504–643 (HVKAKKQNRP…SDILQNDEEA (140 aa)) is disordered. Pro residues predominate over residues 522–532 (VPSPSSSPPQG). The span at 618 to 637 (TSQVTSDYETNNNSDSSDIL) shows a compositional bias: polar residues. Residues 669–1141 (KPILAPEPLV…EETLAPQPDL (473 aa)) are interaction with SLFN12. The 420-residue stretch at 674-1093 (PEPLVMDNLD…MMWKKVIEEE (420 aa)) folds into the PDEase domain. Residue His752 is the Proton donor of the active site. An AMP-binding site is contributed by His752. Mn(2+) contacts are provided by His756, His836, Asp837, and Asp950. AMP-binding residues include Asp837, Asp950, and Gln1001. Asp837 contributes to the Mg(2+) binding site. Disordered stretches follow at residues 1024-1062 (GKWV…EAPR) and 1098-1141 (GTEN…QPDL). The segment covering 1029 to 1046 (DSDDSGDTDDPEEEEEEA) has biased composition (acidic residues). Ser1033 bears the Phosphoserine mark. Thr1036 bears the Phosphothreonine mark. Polar residues predominate over residues 1098 to 1113 (GTENQAPDQAPLQHSS). Residue Lys1120 forms a Glycyl lysine isopeptide (Lys-Gly) (interchain with G-Cter in SUMO2) linkage.

The protein belongs to the cyclic nucleotide phosphodiesterase family. PDE3 subfamily. As to quaternary structure, homodimer. Interacts with PDE3A; direct low affinity interaction which is stimulated by binding of 17beta-estradiol/E2 to PDE3A and that positively regulates the ribonuclease activity of SLFN12. The cofactor is Mn(2+). Mg(2+) is required as a cofactor.

It is found in the membrane. It localises to the cytoplasm. Its subcellular location is the cytosol. It catalyses the reaction a nucleoside 3',5'-cyclic phosphate + H2O = a nucleoside 5'-phosphate + H(+). The enzyme catalyses 3',5'-cyclic AMP + H2O = AMP + H(+). The catalysed reaction is 3',5'-cyclic GMP + H2O = GMP + H(+). It carries out the reaction 3',5'-cyclic UMP + H2O = UMP + H(+). Functionally, cyclic nucleotide phosphodiesterase with specificity for the second messengers cAMP and cGMP, which are key regulators of many important physiological processes. Also has activity toward cUMP. Independently of its catalytic activity it is part of an E2/17beta-estradiol-induced pro-apoptotic signaling pathway. E2 stabilizes the PDE3A/SLFN12 complex in the cytosol, promoting the dephosphorylation of SLFN12 and activating its pro-apoptotic ribosomal RNA/rRNA ribonuclease activity. This apoptotic pathway might be relevant in tissues with high concentration of E2 and be for instance involved in placenta remodeling. This is cGMP-inhibited 3',5'-cyclic phosphodiesterase 3A from Rattus norvegicus (Rat).